Consider the following 212-residue polypeptide: Pyridoxine/pyridoxamine 5'-phosphate oxidase (212 aa).

Substrate contacts are provided by residues 8–11 (RTNY) and K66. FMN contacts are provided by residues 61-66 (RIVLLK), 76-77 (FT), K83, and Q105. Substrate is bound by residues Y123, R127, and S131. Residues 140-141 (QS) and W185 contribute to the FMN site. 191–193 (RLH) provides a ligand contact to substrate. R195 lines the FMN pocket.

This sequence belongs to the pyridoxamine 5'-phosphate oxidase family. As to quaternary structure, homodimer. FMN is required as a cofactor.

The enzyme catalyses pyridoxamine 5'-phosphate + O2 + H2O = pyridoxal 5'-phosphate + H2O2 + NH4(+). It catalyses the reaction pyridoxine 5'-phosphate + O2 = pyridoxal 5'-phosphate + H2O2. It functions in the pathway cofactor metabolism; pyridoxal 5'-phosphate salvage; pyridoxal 5'-phosphate from pyridoxamine 5'-phosphate: step 1/1. The protein operates within cofactor metabolism; pyridoxal 5'-phosphate salvage; pyridoxal 5'-phosphate from pyridoxine 5'-phosphate: step 1/1. In terms of biological role, catalyzes the oxidation of either pyridoxine 5'-phosphate (PNP) or pyridoxamine 5'-phosphate (PMP) into pyridoxal 5'-phosphate (PLP). The protein is Pyridoxine/pyridoxamine 5'-phosphate oxidase of Leptospira biflexa serovar Patoc (strain Patoc 1 / Ames).